The following is a 238-amino-acid chain: Sugar fermentation stimulation protein homolog (238 aa).

It belongs to the SfsA family.

In Shewanella denitrificans (strain OS217 / ATCC BAA-1090 / DSM 15013), this protein is Sugar fermentation stimulation protein homolog.